Here is a 112-residue protein sequence, read N- to C-terminus: Cryptic phage CTXphi transcriptional repressor RstR (112 aa).

Residues 7 to 61 form the HTH cro/C1-type domain; that stretch reads LANQRKAINKTQAQMADEIGISLTSYKKYESGEGLPTMENLVKIADALEISIDEL. The H-T-H motif DNA-binding region spans 18–37; it reads QAQMADEIGISLTSYKKYES.

Its function is as follows. Transcriptional repressor of the integrated CTXPhi phage gene rstA2. The protein is Cryptic phage CTXphi transcriptional repressor RstR (rstR1) of Vibrio cholerae serotype O1 (strain ATCC 39315 / El Tor Inaba N16961).